We begin with the raw amino-acid sequence, 587 residues long: Polyadenylate-binding protein-interacting protein 3 (587 aa).

One can recognise a Sm domain in the interval 51–132 (LLVYFTTCNI…LVQVIAKDLP (82 aa)). A disordered region spans residues 422 to 503 (AKSENSSGWP…QSPQSPVFDG (82 aa)). Over residues 431 to 464 (PGSSISRNSENSAASSASNLPILSPSSSGSLSSE) the composition is skewed to low complexity. The PAM2-like 1; degenerate signature appears at 467–475 (TLNPNAKEF). Residues 476–486 (KLNPNAKSFKP) carry the PAM2-like 2 motif. Residues 486–498 (PSPSATRPQSPQS) show a composition bias toward polar residues.

This Arabidopsis thaliana (Mouse-ear cress) protein is Polyadenylate-binding protein-interacting protein 3 (CID3).